Here is a 260-residue protein sequence, read N- to C-terminus: Snake venom serine protease 2B (260 aa).

Positions 1-18 (MVLIRVLANLLILQLSYA) are cleaved as a signal peptide. Residues 19-24 (QKSSEL) constitute a propeptide that is removed on maturation. Residues 25-251 (VVGGDECNIN…HLDWIQSIIA (227 aa)) form the Peptidase S1 domain. Intrachain disulfides connect Cys-31–Cys-165, Cys-52–Cys-68, Cys-102–Cys-258, Cys-144–Cys-212, Cys-176–Cys-191, and Cys-202–Cys-227. The active-site Charge relay system is His-67. Residues Asn-101 and Asn-105 are each glycosylated (N-linked (GlcNAc...) asparagine). Asp-112 serves as the catalytic Charge relay system. 2 N-linked (GlcNAc...) asparagine glycosylation sites follow: Asn-123 and Asn-156. The active-site Charge relay system is Ser-206.

Belongs to the peptidase S1 family. Snake venom subfamily. As to quaternary structure, monomer. In terms of tissue distribution, expressed by the venom gland.

It localises to the secreted. Functionally, snake venom serine protease that may act in the hemostasis system of the prey. This Craspedocephalus gramineus (Bamboo pit viper) protein is Snake venom serine protease 2B (TLG2B).